A 310-amino-acid chain; its full sequence is E3 ubiquitin-protein ligase AIP2 (310 aa).

Residues 230–271 (CCICKENLVIGDKMQELPCKHTFHPPCLKPWLDEHNSCPICR) form an RING-type; atypical zinc finger. The stretch at 276-306 (TDDQKYENWKEREKEAEEERKGAENAVRGGE) forms a coiled coil. Over residues 285-298 (KEREKEAEEERKGA) the composition is skewed to basic and acidic residues. Residues 285–310 (KEREKEAEEERKGAENAVRGGEYMYV) are disordered.

As to quaternary structure, interacts with ABI3 (via C-terminus). In terms of processing, auto-ubiquitinated. In terms of tissue distribution, highly expressed in leaves and at lower levels in flowers and seeds.

Its subcellular location is the nucleus. The protein resides in the cytoplasm. It carries out the reaction S-ubiquitinyl-[E2 ubiquitin-conjugating enzyme]-L-cysteine + [acceptor protein]-L-lysine = [E2 ubiquitin-conjugating enzyme]-L-cysteine + N(6)-ubiquitinyl-[acceptor protein]-L-lysine.. It participates in protein modification; protein ubiquitination. Functionally, E3 ubiquitin-protein ligase that acts as a negative regulator of abscisic acid (ABA) signaling. Mediates ubiquitination and subsequent proteasomal degradation of the transcription factor ABI3. The protein is E3 ubiquitin-protein ligase AIP2 (AIP2) of Arabidopsis thaliana (Mouse-ear cress).